We begin with the raw amino-acid sequence, 69 residues long: KKNDYPVDTAKRNCMLDCNVWDDEGYCDNFCKGRKAESGYCYKLKAACYCYGLPDDSPTKTSGRCNPNV.

One can recognise an LCN-type CS-alpha/beta domain in the interval lysine 2–asparagine 66. 4 cysteine pairs are disulfide-bonded: cysteine 14–cysteine 65, cysteine 18–cysteine 41, cysteine 27–cysteine 48, and cysteine 31–cysteine 50.

Belongs to the long (4 C-C) scorpion toxin superfamily. Sodium channel inhibitor family. As to expression, expressed by the venom gland.

It localises to the secreted. Functionally, inhibits voltage-gated sodium channels (Nav). In Tityus metuendus (Scorpion), this protein is Sodium channel toxin.